We begin with the raw amino-acid sequence, 105 residues long: Small ribosomal subunit protein uS10 (105 aa).

It belongs to the universal ribosomal protein uS10 family. Part of the 30S ribosomal subunit.

Involved in the binding of tRNA to the ribosomes. This chain is Small ribosomal subunit protein uS10, found in Agathobacter rectalis (strain ATCC 33656 / DSM 3377 / JCM 17463 / KCTC 5835 / VPI 0990) (Eubacterium rectale).